The primary structure comprises 78 residues: Large ribosomal subunit protein bL28 (78 aa).

The protein belongs to the bacterial ribosomal protein bL28 family.

The sequence is that of Large ribosomal subunit protein bL28 from Thiobacillus denitrificans (strain ATCC 25259 / T1).